The primary structure comprises 497 residues: Glutathione hydrolase 6 (497 aa).

The interval 1-34 (MDATTGPVHYHKLQLWEPGVESEEEEEEEEEEIA) is disordered. At 1 to 51 (MDATTGPVHYHKLQLWEPGVESEEEEEEEEEEIAEPLVLSLRRLQNTPRNE) the chain is on the cytoplasmic side. The segment covering 20 to 34 (VESEEEEEEEEEEIA) has biased composition (acidic residues). A helical; Signal-anchor for type II membrane protein membrane pass occupies residues 52-72 (VGGLPGAWARLLAGLLLLAVS). Over 73 to 497 (SSLALRQLHS…PSGCCPFQGY (425 aa)) the chain is Extracellular. 4 N-linked (GlcNAc...) asparagine glycosylation sites follow: N164, N169, N367, and N378.

It belongs to the gamma-glutamyltransferase family. Heterodimer composed of the light and heavy chains. The active site is located in the light chain. Post-translationally, cleaved by autocatalysis into a large and a small subunit and the autocatalytic cleavage is essential to the functional activation of the enzyme.

Its subcellular location is the membrane. The catalysed reaction is an N-terminal (5-L-glutamyl)-[peptide] + an alpha-amino acid = 5-L-glutamyl amino acid + an N-terminal L-alpha-aminoacyl-[peptide]. The enzyme catalyses glutathione + H2O = L-cysteinylglycine + L-glutamate. It catalyses the reaction an S-substituted glutathione + H2O = an S-substituted L-cysteinylglycine + L-glutamate. It functions in the pathway sulfur metabolism; glutathione metabolism. Hydrolyzes and transfers gamma-glutamyl moieties from glutathione and other gamma-glutamyl compounds to acceptors. This chain is Glutathione hydrolase 6, found in Mus musculus (Mouse).